We begin with the raw amino-acid sequence, 138 residues long: Probable phospholipase A2 homolog 1 (138 aa).

The N-terminal stretch at 1-21 (MPPRSPLLALVFLAAGVLSSA) is a signal peptide. Cystine bridges form between cysteine 29-cysteine 56, cysteine 33-cysteine 62, cysteine 38-cysteine 109, cysteine 49-cysteine 69, cysteine 68-cysteine 93, and cysteine 75-cysteine 86. Tyrosine 48, glycine 50, and tryptophan 53 together coordinate Ca(2+). The active site involves histidine 72. Residue aspartate 73 participates in Ca(2+) binding.

Belongs to the phospholipase A2 family. It depends on Ca(2+) as a cofactor.

The protein localises to the secreted. It carries out the reaction a 1,2-diacyl-sn-glycero-3-phosphocholine + H2O = a 1-acyl-sn-glycero-3-phosphocholine + a fatty acid + H(+). PA2 catalyzes the calcium-dependent hydrolysis of the 2-acyl groups in 3-sn-phosphoglycerides. Releases lysophospholipids (LPLs) and free fatty acids (FFAs) from membrane phospholipids in response to hormones and other external stimuli. In Oryza sativa subsp. japonica (Rice), this protein is Probable phospholipase A2 homolog 1 (PLA2-I).